Reading from the N-terminus, the 207-residue chain is uncharacterized protein (207 aa).

The next 5 membrane-spanning stretches (helical) occupy residues 28-48 (IAVL…IVFV), 59-79 (EGFI…FLIV), 112-132 (MFLL…VAGL), 140-160 (FILA…FIGY), and 165-185 (LITQ…LWYV).

It is found in the cell membrane. This is an uncharacterized protein from Bacillus subtilis (strain 168).